The chain runs to 568 residues: Hemagglutinin-neuraminidase (568 aa).

Residues 1 to 18 (MSGAEGNTNKRTFRAVFR) lie on the Intravirion side of the membrane. Residues 19–39 (TLIILITLTILALSAAILYEV) form a helical membrane-spanning segment. The Virion surface segment spans residues 40-568 (THTSNGSESN…VPFLREVIIT (529 aa)). Residues N44 and N111 are each glycosylated (N-linked (GlcNAc...) asparagine; by host). 3 cysteine pairs are disulfide-bonded: C162/C186, C176/C237, and C228/C241. An involved in neuraminidase activity region spans residues 224–229 (NRKSCS). N-linked (GlcNAc...) asparagine; by host glycans are attached at residues N268 and N280. 3 disulfide bridges follow: C334-C455, C366-C376, and C449-C459. N-linked (GlcNAc...) asparagine; by host glycosylation is present at N382. N513 is a glycosylation site (N-linked (GlcNAc...) asparagine; by host). C531 and C542 form a disulfide bridge.

Belongs to the paramyxoviruses hemagglutinin-neuraminidase family. In terms of assembly, homotetramer; composed of disulfide-linked homodimers.

The protein localises to the virion membrane. The protein resides in the host cell membrane. The enzyme catalyses Hydrolysis of alpha-(2-&gt;3)-, alpha-(2-&gt;6)-, alpha-(2-&gt;8)- glycosidic linkages of terminal sialic acid residues in oligosaccharides, glycoproteins, glycolipids, colominic acid and synthetic substrates.. Attaches the virus to sialic acid-containing cell receptors and thereby initiating infection. Binding of HN protein to the receptor induces a conformational change that allows the F protein to trigger virion/cell membranes fusion. In terms of biological role, neuraminidase activity ensures the efficient spread of the virus by dissociating the mature virions from the neuraminic acid containing glycoproteins. This is Hemagglutinin-neuraminidase (HN) from Simiiformes (SV41).